The primary structure comprises 392 residues: HCLS1-binding protein 3 (392 aa).

Met-1 bears the N-acetylmethionine mark. Residues Ser-3, Ser-139, and Ser-194 each carry the phosphoserine modification. A PX domain is found at 19-142 (GLDLTVPQHQ…EFLGTRSPGA (124 aa)). Disordered regions lie at residues 138 to 162 (RSPG…QTGN), 174 to 265 (DQVA…PLKL), and 319 to 364 (GAEP…KPQE). A compositionally biased stretch (acidic residues) spans 190–201 (DAEESLEEEEAL). Positions 208–220 (RSKKPKKHPKVAV) are enriched in basic residues. The residue at position 249 (Ser-249) is a Phosphoserine. Over residues 325 to 335 (KPQLKPKPPVA) the composition is skewed to pro residues. Lys-337 carries the post-translational modification N6-acetyllysine.

In terms of assembly, binds HCLS1. Interacts with the SH3 domain of HCLS1 in vitro.

Functionally, may be a modulator of IL-2 signaling. This is HCLS1-binding protein 3 (HS1BP3) from Homo sapiens (Human).